Here is a 133-residue protein sequence, read N- to C-terminus: Large ribosomal subunit protein uL16c (133 aa).

It belongs to the universal ribosomal protein uL16 family. In terms of assembly, part of the 50S ribosomal subunit.

It localises to the plastid. The protein localises to the chloroplast. The sequence is that of Large ribosomal subunit protein uL16c from Liriodendron tulipifera (Tuliptree).